We begin with the raw amino-acid sequence, 133 residues long: Ribosome-binding factor A (133 aa).

This sequence belongs to the RbfA family. As to quaternary structure, monomer. Binds 30S ribosomal subunits, but not 50S ribosomal subunits or 70S ribosomes.

The protein resides in the cytoplasm. Its function is as follows. One of several proteins that assist in the late maturation steps of the functional core of the 30S ribosomal subunit. Associates with free 30S ribosomal subunits (but not with 30S subunits that are part of 70S ribosomes or polysomes). Required for efficient processing of 16S rRNA. May interact with the 5'-terminal helix region of 16S rRNA. The sequence is that of Ribosome-binding factor A from Alteromonas mediterranea (strain DSM 17117 / CIP 110805 / LMG 28347 / Deep ecotype).